The primary structure comprises 309 residues: Protein phosphatase 1 regulatory subunit 42 (309 aa).

7 LRR repeats span residues 29–50 (KITH…SLCK), 51–72 (NLSV…NYAT), 73–94 (NLTH…RSLK), 95–116 (KLEK…EGLG), 117–138 (ELRE…LFDP), 147–168 (SLCI…ELLE), and 169–190 (NLNQ…EFLL). In terms of domain architecture, LRRCT spans 204 to 242 (NPVCLKPKYRDRLILVSKSLEFLDGKEIKNIERQFLMNW).

Interacts with PPP1CC isoform gamma-2; the interaction is direct. Interacts with actin, dynein, KIF5B, KIFC1 and tubulin. Associates with microtubules. Post-translationally, phosphorylated; in the testis.

The protein resides in the cytoplasm. The protein localises to the cytoskeleton. It localises to the microtubule organizing center. Its subcellular location is the centrosome. In terms of biological role, regulates phosphatase activity of protein phosphatase 1 (PP1) complexes in the testis. This Homo sapiens (Human) protein is Protein phosphatase 1 regulatory subunit 42.